The primary structure comprises 415 residues: Serine hydroxymethyltransferase (415 aa).

(6S)-5,6,7,8-tetrahydrofolate contacts are provided by residues Leu117 and 121–123 (GHL). An N6-(pyridoxal phosphate)lysine modification is found at Lys226. Residue Glu241 participates in (6S)-5,6,7,8-tetrahydrofolate binding.

It belongs to the SHMT family. In terms of assembly, homodimer. Pyridoxal 5'-phosphate serves as cofactor.

It is found in the cytoplasm. The enzyme catalyses (6R)-5,10-methylene-5,6,7,8-tetrahydrofolate + glycine + H2O = (6S)-5,6,7,8-tetrahydrofolate + L-serine. The protein operates within one-carbon metabolism; tetrahydrofolate interconversion. Its pathway is amino-acid biosynthesis; glycine biosynthesis; glycine from L-serine: step 1/1. Its function is as follows. Catalyzes the reversible interconversion of serine and glycine with tetrahydrofolate (THF) serving as the one-carbon carrier. This reaction serves as the major source of one-carbon groups required for the biosynthesis of purines, thymidylate, methionine, and other important biomolecules. Also exhibits THF-independent aldolase activity toward beta-hydroxyamino acids, producing glycine and aldehydes, via a retro-aldol mechanism. The polypeptide is Serine hydroxymethyltransferase (Bacillus pumilus (strain SAFR-032)).